Consider the following 279-residue polypeptide: Monoacylglycerol lipase (279 aa).

Residue Ser-110 is the Nucleophile of the active site. Active-site charge relay system residues include Asp-226 and His-256.

Belongs to the AB hydrolase superfamily. Monomer.

Its subcellular location is the secreted. The protein resides in the cell wall. The enzyme catalyses a 1-acylglycerol + H2O = glycerol + a fatty acid + H(+). It carries out the reaction Hydrolyzes glycerol monoesters of long-chain fatty acids.. It catalyses the reaction 1-butyrylglycerol + H2O = butanoate + glycerol + H(+). The catalysed reaction is 1-octanoylglycerol + H2O = octanoate + glycerol + H(+). The enzyme catalyses 1-decanoylglycerol + H2O = decanoate + glycerol + H(+). It carries out the reaction 1-dodecanoylglycerol + H2O = dodecanoate + glycerol + H(+). It catalyses the reaction 1-tetradecanoylglycerol + H2O = tetradecanoate + glycerol + H(+). The catalysed reaction is 1-(9Z-octadecenoyl)-glycerol + H2O = glycerol + (9Z)-octadecenoate + H(+). The enzyme catalyses 2-(9Z-octadecenoyl)-glycerol + H2O = glycerol + (9Z)-octadecenoate + H(+). With respect to regulation, inhibited by the serine esterase inhibitors PMSF (100%), E600 (80%) and THL (22%). Virtual screening identified a tautomer of ZINC13451138, known inhibitor for HIV-1 integrase, as a potential inhibitor. Involved in the hydrolysis of exogenous host lipids during chronic infection. Catalyzes the hydrolysis of both monoacylglycerols (MAG) and diacylglycerols (DAG), with a preference for MAG. It hydrolyzes 2-MAG, 1-3-MAG and MAG with short, medium and long chain fatty acids such as 1-monobutyroyl-rac-glycerol (MC4), 1-mono-octanoyl-rac-glycerol (MC8), 1-monodecanoyl-rac-glycerol (MC10), 1-monolauroyl-rac-glycerol (MC12), 1-monomyristoyl-rac-glycerol (MC14) and 1-mono-oleyl-rac-glycerol (MC18:1). Also able to hydrolyze DAG with short (DiC6) and medium (DiC10) fatty acid chains, but not with longest fatty acid chains. Can also hydrolyze vinyl laurate (VC12), vinyl butyrate (VC4) and vinyl propionate (VC3). Functionally, induces an inflammatory response and cell apoptosis in the host cells. Increases expression of IL-6, NF-kappaB, TLR-2, TLR-6, TNF-alpha, and MyD88 in mouse alveolar macrophage RAW264.7 cells. Persistent expression induces RAW264.7 cell apoptosis in vitro. This Mycobacterium tuberculosis (strain ATCC 25618 / H37Rv) protein is Monoacylglycerol lipase.